Reading from the N-terminus, the 757-residue chain is Inhibitor of nuclear factor kappa-B kinase subunit beta (757 aa).

In terms of domain architecture, Protein kinase spans 15–300 (WEMKERLGTG…DPQYGPNGCF (286 aa)). ATP-binding positions include 21 to 29 (LGTGGFGNV) and Lys-44. Asp-145 functions as the Proton acceptor in the catalytic mechanism. Lys-163 participates in a covalent cross-link: Glycyl lysine isopeptide (Lys-Gly) (interchain with G-Cter in ubiquitin). Phosphoserine; by TBK1 and PKC/PRKCZ is present on Ser-177. Position 179 is an S-nitrosocysteine (Cys-179). Residue Ser-181 is modified to Phosphoserine; by TBK1, PKC/PRKCZ and PDPK1. Pro-191 bears the Hydroxyproline mark. The tract at residues 458-479 (LLRNNSCLSKMKNAMASTAQQL) is leucine-zipper. Position 670 is a phosphoserine; by autocatalysis (Ser-670). Ser-672 is subject to Phosphoserine. Phosphoserine; by autocatalysis occurs at positions 675, 682, 689, 692, 697, 705, 733, and 740. The interval 682–703 (SHPGHLMSQPSSACDSLPDSDK) is disordered. The segment at 737–742 (LDWSWL) is NEMO-binding.

Belongs to the protein kinase superfamily. Ser/Thr protein kinase family. I-kappa-B kinase subfamily. As to quaternary structure, component of the I-kappa-B-kinase (IKK) core complex consisting of CHUK, IKBKB and IKBKG; probably four alpha/CHUK-beta/IKBKB dimers are associated with four gamma/IKBKG subunits. The IKK core complex seems to associate with regulatory or adapter proteins to form a IKK-signalosome holo-complex. The IKK complex associates with TERF2IP/RAP1, leading to promote IKK-mediated phosphorylation of RELA/p65. Part of a complex composed of NCOA2, NCOA3, CHUK/IKKA, IKBKB, IKBKG and CREBBP. Part of a 70-90 kDa complex at least consisting of CHUK/IKKA, IKBKB, NFKBIA, RELA, ELP1 and MAP3K14. Found in a membrane raft complex, at least composed of BCL10, CARD11, DPP4 and IKBKB. Interacts with SQSTM1 through PRKCZ or PRKCI. Forms an NGF-induced complex with IKBKB, PRKCI and TRAF6. May interact with MAVS/IPS1. Interacts with NALP2. Interacts with TICAM1. Interacts with FAF1; the interaction disrupts the IKK complex formation. Interacts with ATM. Part of a ternary complex consisting of TANK, IKBKB and IKBKG. Interacts with NIBP; the interaction is direct. Interacts with ARRB1 and ARRB2. Interacts with TRIM21. Interacts with NLRC5; prevents IKBKB phosphorylation and kinase activity. Interacts with PDPK1. Interacts with EIF2AK2/PKR. The phosphorylated form interacts with PPM1A and PPM1B. Interacts with ZNF268 isoform 2; the interaction is further increased in a TNF-alpha-dependent manner. Interacts with IKBKE. Interacts with ZC3H12A. Interacts with AKAP13. Interacts with LRRC14; disrupts IKBKB-IKBKG interaction preventing I-kappa-B-kinase (IKK) core complex formation and leading to a decrease of IKBKB phosphorylation and NF-kappaB activation. Interacts with SASH1. Interacts with ARFIP2. Interacts with FKBP5. In terms of processing, upon cytokine stimulation, phosphorylated on Ser-177 and Ser-181 by MEKK1 and/or MAP3K14/NIK as well as TBK1 and PRKCZ; which enhances activity. Phosphorylated by MAP3K7/TAK1 in response to NOD1 and NOD2 signaling, promoting activation and phosphorylation of NF-kappa-B inhibitors, leading to NF-kappa-B activation. Once activated, autophosphorylates on the C-terminal serine cluster; which decreases activity and prevents prolonged activation of the inflammatory response. Phosphorylated by the IKK-related kinases TBK1 and IKBKE, which is associated with reduced CHUK/IKKA and IKBKB activity and NF-kappa-B-dependent gene transcription. Dephosphorylated at Ser-177 and Ser-181 by PPM1A and PPM1B. Post-translationally, ubiquitinated. Monoubiquitination involves TRIM21 that leads to inhibition of Tax-induced NF-kappa-B signaling. 'Ser-163' may not serve as a monoubiquitination site. Ubiquitination on 'Ser-163' may modulate phosphorylation on C-terminal serine residues. Hydroxylated by PHD1/EGLN2, loss of hydroxylation under hypoxic conditions results in activation of NF-kappa-B.

It localises to the cytoplasm. Its subcellular location is the nucleus. The protein resides in the membrane raft. It catalyses the reaction L-seryl-[I-kappa-B protein] + ATP = O-phospho-L-seryl-[I-kappa-B protein] + ADP + H(+). The enzyme catalyses L-seryl-[protein] + ATP = O-phospho-L-seryl-[protein] + ADP + H(+). It carries out the reaction L-threonyl-[protein] + ATP = O-phospho-L-threonyl-[protein] + ADP + H(+). Serine kinase that plays an essential role in the NF-kappa-B signaling pathway which is activated by multiple stimuli such as inflammatory cytokines, bacterial or viral products, DNA damages or other cellular stresses. Acts as a part of the canonical IKK complex in the conventional pathway of NF-kappa-B activation. Phosphorylates inhibitors of NF-kappa-B on 2 critical serine residues. These modifications allow polyubiquitination of the inhibitors and subsequent degradation by the proteasome. In turn, free NF-kappa-B is translocated into the nucleus and activates the transcription of hundreds of genes involved in immune response, growth control, or protection against apoptosis. In addition to the NF-kappa-B inhibitors, phosphorylates several other components of the signaling pathway including NEMO/IKBKG, NF-kappa-B subunits RELA and NFKB1, as well as IKK-related kinases TBK1 and IKBKE. IKK-related kinase phosphorylations may prevent the overproduction of inflammatory mediators since they exert a negative regulation on canonical IKKs. Phosphorylates FOXO3, mediating the TNF-dependent inactivation of this pro-apoptotic transcription factor. Also phosphorylates other substrates including NAA10, NCOA3, BCL10 and IRS1. Phosphorylates RIPK1 at 'Ser-25' which represses its kinase activity and consequently prevents TNF-mediated RIPK1-dependent cell death. Phosphorylates the C-terminus of IRF5, stimulating IRF5 homodimerization and translocation into the nucleus. This chain is Inhibitor of nuclear factor kappa-B kinase subunit beta (Ikbkb), found in Rattus norvegicus (Rat).